Here is a 126-residue protein sequence, read N- to C-terminus: uncharacterized protein (126 aa).

A signal peptide spans 1-27 (MKNLFIFLSLMMMFVLTACGGSKYDDA). Positions 93–126 (MTDMPGNGENDRLGLSKKTPDYEEVKGEETELEE) are disordered. Residues 101 to 126 (ENDRLGLSKKTPDYEEVKGEETELEE) are compositionally biased toward basic and acidic residues.

This is an uncharacterized protein from Bacillus subtilis (strain 168).